A 103-amino-acid chain; its full sequence is Small ribosomal subunit protein uS10 (103 aa).

Belongs to the universal ribosomal protein uS10 family. In terms of assembly, part of the 30S ribosomal subunit.

In terms of biological role, involved in the binding of tRNA to the ribosomes. In Ruthia magnifica subsp. Calyptogena magnifica, this protein is Small ribosomal subunit protein uS10.